The following is a 383-amino-acid chain: MAEPRPLTIALVAGETSGDILGAGLIRALKARIPDARFVGVAGPLMQAEGCEAWYEMEELAVMGIVEVLGRLRRLLHIRADLTRRFGELRPDVFVGIDAPDFNITLEGNLKKQGIKTIHYVSPSVWAWRQKRVFKIGRATDLVLAFLPFEKAFYDKFNVPCRFIGHTMADAMPLDPDKGAARDRLGIPHNVRCLALLPGSRGAEVEMLSADFLKTAQLLRVTYPDLQVVVPLVNAKRREQFERIKAETAPDMIVHMLDGQARDAMIASDAALLASGTAALECMLAKCPMVVGYRMKPFTFWLAKRLVKTDYVSLPNLLAGRELVKELLQDECEPQVLAAALQPLLADGKTSHEMHETFRALHQQIRCNADEQAADAVLELAKQ.

Belongs to the LpxB family.

It catalyses the reaction 2-N,3-O-bis[(3R)-3-hydroxytetradecanoyl]-alpha-D-glucosaminyl 1-phosphate + UDP-2-N,3-O-bis[(3R)-3-hydroxytetradecanoyl]-alpha-D-glucosamine = lipid A disaccharide (E. coli) + UDP + H(+). The enzyme catalyses a lipid X + a UDP-2-N,3-O-bis[(3R)-3-hydroxyacyl]-alpha-D-glucosamine = a lipid A disaccharide + UDP + H(+). It functions in the pathway glycolipid biosynthesis; lipid IV(A) biosynthesis; lipid IV(A) from (3R)-3-hydroxytetradecanoyl-[acyl-carrier-protein] and UDP-N-acetyl-alpha-D-glucosamine: step 5/6. In terms of biological role, condensation of UDP-2,3-diacylglucosamine and 2,3-diacylglucosamine-1-phosphate to form lipid A disaccharide, a precursor of lipid A, a phosphorylated glycolipid that anchors the lipopolysaccharide to the outer membrane of the cell. This chain is Lipid-A-disaccharide synthase, found in Klebsiella pneumoniae (strain 342).